A 1582-amino-acid chain; its full sequence is MPLAFCGTENHSAAYRVDQGVLNNGCFVDALNVVPHVFLLFITFPILFIGWGSQSSKVHIHHSTWLHFPGHNLRWILTFILLFVLVCEIAEGILSDGVTESRHLHLYMPAGMAFMAAITSVVYYHNIETSNFPKLLIALLIYWTLAFITKTIKFVKFYDHAIGFSQLRFCLTGLLVILYGMLLLVEVNVIRVRRYIFFKTPREVKPPEDLQDLGVRFLQPFVNLLSKGTYWWMNAFIKTAHKKPIDLRAIAKLPIAMRALTNYQRLCVAFDAQARKDTQSPQGARAIWRALCHAFGRRLILSSTFRILADLLGFAGPLCIFGIVDHLGKENHVFQPKTQFLGVYFVSSQEFLGNAYVLAVLLFLALLLQRTFLQASYYVAIETGINLRGAIQTKIYNKIMHMSTSNLSMGEMTAGQICNLVAIDTNQLMWFFFLCPNLWTMPVQIIVGVILLYYILGVSALIGAAVIILLAPVQYFVATKLSQAQRTTLEHSNERLKQTNEMLRGMKLLKLYAWESIFCSRVEVTRRKEMTSLRAFAVYTSISIFMNTAIPIAAVLITFVGHVSFFKESDLSPSVAFASLSLFHILVTPLFLLSSVVRSTVKALVSVQKLSEFLSSAEIREEQCAPREPAPQGQAGKYQAVPLKVVNRKRPAREEVRDLLGPLQRLAPSMDGDADNFCVQIIGGFFTWTPDGIPTLSNITIRIPRGQLTMIVGQVGCGKSSLLLATLGEMQKVSGAVFWNSNLPDSEGEDPSSPERETAAGSDIRSRGPVAYASQKPWLLNATVEENITFESPFNKQRYKMVIEACSLQPDIDILPHGDQTQIGERGINLSGGQRQRISVARALYQQTNVVFLDDPFSALDVHLSDHLMQAGILELLRDDKRTVVLVTHKLQYLPHADWIIAMKDGTIQREGTLKDFQRSECQLFEHWKTLMNRQDQELEKETVMERKASEPSQGLPRAMSSRDGLLLDEEEEEEEAAESEEDDNLSSVLHQRAKIPWRACTKYLSSAGILLLSLLVFSQLLKHMVLVAIDYWLAKWTDSALVLSPAARNCSLSQECDLDQSVYAMVFTLLCSLGIVLCLVTSVTVEWTGLKVAKRLHRSLLNRIILAPMRFFETTPLGSILNRFSSDCNTIDQHIPSTLECLSRSTLLCVSALTVISYVTPVFLVALLPLAVVCYFIQKYFRVASRDLQQLDDTTQLPLVSHFAETVEGLTTIRAFRYEARFQQKLLEYTDSNNIASLFLTAANRWLEVCMEYIGACVVLIAAATSISNSLHRELSAGLVGLGLTYALMVSNYLNWMVRNLADMEIQLGAVKRIHALLKTEAESYEGLLAPSLIPKNWPDQGKIQIQNLSVRYDSSLKPVLKHVNTLISPGQKIGICGRTGSGKSSFSLAFFRMVDMFEGRIIIDGIDIAKLPLHTLRSRLSIILQDPVLFSGTIRFNLDPEKKCSDSTLWEALEIAQLKLVVKALPGGLDAIITEGGENFSQGQRQLFCLARAFVRKTSIFIMDEATASIDMATENILQKVVMTAFADRTVVTIAHRVHTILSADLVMVLKRGAILEFDKPETLLSQKDSVFASFVRADK.

The Extracellular segment spans residues 1 to 30 (MPLAFCGTENHSAAYRVDQGVLNNGCFVDA). C6 and C26 form a disulfide bridge. The N-linked (GlcNAc...) asparagine glycan is linked to N10. A helical transmembrane segment spans residues 31–47 (LNVVPHVFLLFITFPIL). The Cytoplasmic portion of the chain corresponds to 48 to 72 (FIGWGSQSSKVHIHHSTWLHFPGHN). The helical transmembrane segment at 73–89 (LRWILTFILLFVLVCEI) threads the bilayer. Residues 90 to 106 (AEGILSDGVTESRHLHL) are Extracellular-facing. The helical transmembrane segment at 107-123 (YMPAGMAFMAAITSVVY) threads the bilayer. The Cytoplasmic portion of the chain corresponds to 124–136 (YHNIETSNFPKLL). The helical transmembrane segment at 137–153 (IALLIYWTLAFITKTIK) threads the bilayer. The Extracellular portion of the chain corresponds to 154 to 169 (FVKFYDHAIGFSQLRF). The helical transmembrane segment at 170 to 186 (CLTGLLVILYGMLLLVE) threads the bilayer. Residues 187–303 (VNVIRVRRYI…AFGRRLILSS (117 aa)) are Cytoplasmic-facing. Residues 299–602 (LILSSTFRIL…LSSVVRSTVK (304 aa)) enclose the ABC transmembrane type-1 1 domain. Residues 304–319 (TFRILADLLGFAGPLC) traverse the membrane as a helical segment. Residues 320–356 (IFGIVDHLGKENHVFQPKTQFLGVYFVSSQEFLGNAY) lie on the Extracellular side of the membrane. Residues 357–372 (VLAVLLFLALLLQRTF) form a helical membrane-spanning segment. Over 373 to 438 (LQASYYVAIE…MWFFFLCPNL (66 aa)) the chain is Cytoplasmic. The helical transmembrane segment at 439 to 454 (WTMPVQIIVGVILLYY) threads the bilayer. Over 455 to 460 (ILGVSA) the chain is Extracellular. A helical membrane pass occupies residues 461–473 (LIGAAVIILLAPV). Residues 474–541 (QYFVATKLSQ…SLRAFAVYTS (68 aa)) lie on the Cytoplasmic side of the membrane. A helical transmembrane segment spans residues 542–557 (ISIFMNTAIPIAAVLI). Over 558 to 576 (TFVGHVSFFKESDLSPSVA) the chain is Extracellular. The helical transmembrane segment at 577 to 592 (FASLSLFHILVTPLFL) threads the bilayer. At 593–1013 (LSSVVRSTVK…YLSSAGILLL (421 aa)) the chain is on the cytoplasmic side. Residues 679–930 (VQIIGGFFTW…ECQLFEHWKT (252 aa)) enclose the ABC transporter 1 domain. ATP contacts are provided by W688, G716, S720, and S721. S720 provides a ligand contact to Mg(2+). The segment at 741–766 (SNLPDSEGEDPSSPERETAAGSDIRS) is disordered. Mg(2+) is bound at residue Q775. Residues 939 to 950 (LEKETVMERKAS) are compositionally biased toward basic and acidic residues. A disordered region spans residues 939–962 (LEKETVMERKASEPSQGLPRAMSS). The 295-residue stretch at 1013–1307 (LSLLVFSQLL…MVRNLADMEI (295 aa)) folds into the ABC transmembrane type-1 2 domain. A helical transmembrane segment spans residues 1014 to 1031 (SLLVFSQLLKHMVLVAID). The Extracellular portion of the chain corresponds to 1032–1067 (YWLAKWTDSALVLSPAARNCSLSQECDLDQSVYAMV). A glycan (N-linked (GlcNAc...) asparagine) is linked at N1050. Residues 1068-1084 (FTLLCSLGIVLCLVTSV) form a helical membrane-spanning segment. Residues 1085–1143 (TVEWTGLKVAKRLHRSLLNRIILAPMRFFETTPLGSILNRFSSDCNTIDQHIPSTLECL) lie on the Cytoplasmic side of the membrane. The chain crosses the membrane as a helical span at residues 1144-1161 (SRSTLLCVSALTVISYVT). Residue P1162 is a topological domain, extracellular. A helical transmembrane segment spans residues 1163–1175 (VFLVALLPLAVVC). Residues 1176–1249 (YFIQKYFRVA…FLTAANRWLE (74 aa)) lie on the Cytoplasmic side of the membrane. The chain crosses the membrane as a helical span at residues 1250-1265 (VCMEYIGACVVLIAAA). The Extracellular portion of the chain corresponds to 1266-1281 (TSISNSLHRELSAGLV). A helical transmembrane segment spans residues 1282–1297 (GLGLTYALMVSNYLNW). The Cytoplasmic portion of the chain corresponds to 1298–1582 (MVRNLADMEI…VFASFVRADK (285 aa)). Positions 1345 to 1579 (IQIQNLSVRY…KDSVFASFVR (235 aa)) constitute an ABC transporter 2 domain. Residues T1381, G1382, G1384, K1385, S1386, and S1387 each coordinate ADP. ATP is bound at residue S1483.

It belongs to the ABC transporter superfamily. ABCC family. Conjugate transporter (TC 3.A.1.208) subfamily. As to quaternary structure, forms an heterooctamer with KCNJ11; four ABCC8/SUR1 molecules interact with one KCNJ11 homotetramer.

It localises to the cell membrane. KATP channels are regulated by cytoplasmic ATP/ADP ratios; ATP inhibits the channel by closing the pore, while ADP activates the channel. Activated by phosphatidylinositol 4,5-biphosphate (PtdIns(4,5)P2). Functionally, regulator subunit of pancreatic ATP-sensitive potassium channel (KATP), playing a major role in the regulation of insulin release. In pancreatic cells, it forms KATP channels with KCNJ11; KCNJ11 forms the channel pore while ABCC8 is required for activation and regulation. This is ATP-binding cassette sub-family C member 8 (ABCC8) from Cricetus cricetus (Black-bellied hamster).